The following is a 677-amino-acid chain: uncharacterized protein (677 aa).

Residues 1 to 87 are disordered; the sequence is MGRHSKPDPE…PTGAEPIAAA (87 aa). Residues 17–29 are compositionally biased toward basic and acidic residues; the sequence is SDGHAAEQQHWED. Positions 51–64 are enriched in low complexity; it reads GHYSAVGGYSASGS. 4 consecutive transmembrane segments (helical) span residues 115-135, 192-212, 313-333, and 474-494; these read VSIGVIVALVAVVVMVAGVIL, VAVAVTSAGSDAVINGFIGKW, EAVAAASAPAGAPATAGIGAV, and ATLADTMVTASAGVAATIMLD.

It is found in the cell membrane. This is an uncharacterized protein from Mycobacterium tuberculosis (strain CDC 1551 / Oshkosh).